The primary structure comprises 575 residues: Delta-1-pyrroline-5-carboxylate dehydrogenase, mitochondrial (575 aa).

297-302 lines the NAD(+) pocket; the sequence is GKIQSG. Glutamate 317 serves as the catalytic Proton acceptor. Residue cysteine 351 is the Nucleophile of the active site.

This sequence belongs to the aldehyde dehydrogenase family.

The protein localises to the mitochondrion inner membrane. The catalysed reaction is L-glutamate 5-semialdehyde + NAD(+) + H2O = L-glutamate + NADH + 2 H(+). The protein operates within amino-acid degradation; L-proline degradation into L-glutamate; L-glutamate from L-proline: step 2/2. In Saccharomyces cerevisiae (strain ATCC 204508 / S288c) (Baker's yeast), this protein is Delta-1-pyrroline-5-carboxylate dehydrogenase, mitochondrial (PUT2).